The primary structure comprises 209 residues: Large ribosomal subunit protein bL25 (209 aa).

This sequence belongs to the bacterial ribosomal protein bL25 family. CTC subfamily. Part of the 50S ribosomal subunit; part of the 5S rRNA/L5/L18/L25 subcomplex. Contacts the 5S rRNA. Binds to the 5S rRNA independently of L5 and L18.

Its function is as follows. This is one of the proteins that binds to the 5S RNA in the ribosome where it forms part of the central protuberance. This Xanthomonas campestris pv. campestris (strain 8004) protein is Large ribosomal subunit protein bL25.